The chain runs to 181 residues: Peptidyl-tRNA hydrolase (181 aa).

Position 14 (Tyr14) interacts with tRNA. The active-site Proton acceptor is His19. TRNA is bound by residues Tyr60, Asn62, and Asn108.

It belongs to the PTH family. In terms of assembly, monomer.

The protein resides in the cytoplasm. It carries out the reaction an N-acyl-L-alpha-aminoacyl-tRNA + H2O = an N-acyl-L-amino acid + a tRNA + H(+). In terms of biological role, hydrolyzes ribosome-free peptidyl-tRNAs (with 1 or more amino acids incorporated), which drop off the ribosome during protein synthesis, or as a result of ribosome stalling. Catalyzes the release of premature peptidyl moieties from peptidyl-tRNA molecules trapped in stalled 50S ribosomal subunits, and thus maintains levels of free tRNAs and 50S ribosomes. In Metamycoplasma arthritidis (strain 158L3-1) (Mycoplasma arthritidis), this protein is Peptidyl-tRNA hydrolase.